Consider the following 199-residue polypeptide: Interleukin-11 (199 aa).

The first 21 residues, 1 to 21 (MNCVCRLVLVVLSLWPDRVVA), serve as a signal peptide directing secretion. The segment at 182 to 190 (HLTLDWAVR) is important for interaction with IL11RA and for the stimulation of cell proliferation.

Belongs to the IL-6 superfamily. Interacts with either IL11RA1 or IL11RA2 to associate with IL6ST, giving rise to a multimeric signaling complex.

Its subcellular location is the secreted. Its function is as follows. Cytokine that stimulates the proliferation of hematopoietic stem cells and megakaryocyte progenitor cells and induces megakaryocyte maturation resulting in increased platelet production. Also promotes the proliferation of hepatocytes in response to liver damage. Binding to its receptor formed by IL6ST and either IL11RA1 or IL11RA2 activates a signaling cascade that promotes cell proliferation, also in the context of various cancers. Signaling leads to the activation of intracellular protein kinases and the phosphorylation of STAT3. The interaction with the membrane-bound IL11RA and IL6ST stimulates 'classic signaling', whereas the binding of IL11 and soluble IL11RA to IL6ST stimulates 'trans-signaling'. This chain is Interleukin-11, found in Mus musculus (Mouse).